The chain runs to 121 residues: Small ribosomal subunit protein uS13 (121 aa).

Positions 91-121 (HRRGLPTRGQNTKNNARTRKGPVKTVANKKK) are disordered. Positions 106 to 121 (ARTRKGPVKTVANKKK) are enriched in basic residues.

Belongs to the universal ribosomal protein uS13 family. As to quaternary structure, part of the 30S ribosomal subunit. Forms a loose heterodimer with protein S19. Forms two bridges to the 50S subunit in the 70S ribosome.

Located at the top of the head of the 30S subunit, it contacts several helices of the 16S rRNA. In the 70S ribosome it contacts the 23S rRNA (bridge B1a) and protein L5 of the 50S subunit (bridge B1b), connecting the 2 subunits; these bridges are implicated in subunit movement. Contacts the tRNAs in the A and P-sites. The protein is Small ribosomal subunit protein uS13 of Macrococcus caseolyticus (strain JCSC5402) (Macrococcoides caseolyticum).